The primary structure comprises 343 residues: uncharacterized protein (343 aa).

This is an uncharacterized protein from Tortricidae (ClGV).